Here is a 145-residue protein sequence, read N- to C-terminus: D-aminoacyl-tRNA deacylase (145 aa).

The short motif at 137-138 (GP) is the Gly-cisPro motif, important for rejection of L-amino acids element.

This sequence belongs to the DTD family. In terms of assembly, homodimer.

The protein resides in the cytoplasm. The catalysed reaction is glycyl-tRNA(Ala) + H2O = tRNA(Ala) + glycine + H(+). The enzyme catalyses a D-aminoacyl-tRNA + H2O = a tRNA + a D-alpha-amino acid + H(+). Its function is as follows. An aminoacyl-tRNA editing enzyme that deacylates mischarged D-aminoacyl-tRNAs. Also deacylates mischarged glycyl-tRNA(Ala), protecting cells against glycine mischarging by AlaRS. Acts via tRNA-based rather than protein-based catalysis; rejects L-amino acids rather than detecting D-amino acids in the active site. By recycling D-aminoacyl-tRNA to D-amino acids and free tRNA molecules, this enzyme counteracts the toxicity associated with the formation of D-aminoacyl-tRNA entities in vivo and helps enforce protein L-homochirality. This Erwinia tasmaniensis (strain DSM 17950 / CFBP 7177 / CIP 109463 / NCPPB 4357 / Et1/99) protein is D-aminoacyl-tRNA deacylase.